The primary structure comprises 399 residues: Cytohesin-3 (399 aa).

A coiled-coil region spans residues 14 to 61; the sequence is EDLSLEEREELLDIRRRKKELIDDIERLKYEIAEVMTEIDNLTSVEES. The 130-residue stretch at 77-206 folds into the SEC7 domain; the sequence is FNMDPKKGIQ…IIMLNTSLHN (130 aa). One can recognise a PH domain in the interval 264 to 380; sequence NPDREGWLLK…WMKSIKASIS (117 aa). A 1,2-diacyl-sn-glycero-3-phospho-(1D-myo-inositol-3,4,5-trisphosphate) contacts are provided by residues 273-280, Arg284, Tyr295, Arg305, and Asn354; that span reads KLGGRVKT. The interval 391-399 is C-terminal autoinhibitory region; it reads RKRRIANKK.

In terms of assembly, interacts with TAMALIN. Interacts with FRMD4A. Interacts with FRMD4B.

The protein resides in the cytoplasm. It is found in the cytosol. The protein localises to the cell membrane. Its subcellular location is the cell junction. It localises to the adherens junction. The protein resides in the tight junction. Functionally, promotes guanine-nucleotide exchange on ARF1. Promotes the activation of ARF factors through replacement of GDP with GTP. Plays a role in the epithelial polarization. The chain is Cytohesin-3 (Cyth3) from Mus musculus (Mouse).